The sequence spans 256 residues: uncharacterized protein (256 aa).

One can recognise an HTH deoR-type domain in the interval 7–62; it reads PAERQKTLLNLISKQSVISINNLVNILGVSHMTVRRDIQKLEEDGKVISVSGGVQL. The H-T-H motif DNA-binding region spans 24-43; the sequence is ISINNLVNILGVSHMTVRRD.

This is an uncharacterized protein from Haemophilus influenzae (strain ATCC 51907 / DSM 11121 / KW20 / Rd).